The following is a 201-amino-acid chain: MEKFTVLEGVAAPLKLVNVDTDMIIPKQYLKTIKRTGLGTGLFSEMRYKDDGSDNPDFVLNQSAYKNAKILVAGDNFGCGSSREHAPWALLDFGIRCVISTSFADIFYNNCFKNGILPVVVSKEDLDKLFDDADRGANATLTIDLPAQEIRGPDGGVVKFEIDPFRKRCLIEGLDDIGLTLEKAPAIAAYETAKGAEQPWL.

Belongs to the LeuD family. LeuD type 1 subfamily. As to quaternary structure, heterodimer of LeuC and LeuD.

The enzyme catalyses (2R,3S)-3-isopropylmalate = (2S)-2-isopropylmalate. Its pathway is amino-acid biosynthesis; L-leucine biosynthesis; L-leucine from 3-methyl-2-oxobutanoate: step 2/4. Functionally, catalyzes the isomerization between 2-isopropylmalate and 3-isopropylmalate, via the formation of 2-isopropylmaleate. This is 3-isopropylmalate dehydratase small subunit from Xanthobacter autotrophicus (strain ATCC BAA-1158 / Py2).